The chain runs to 178 residues: Interleukin-10 (178 aa).

Residues 1 to 18 (MHSSALLCCLVLLTGVRA) form the signal peptide. Disulfide bonds link C30-C126 and C80-C132. The N-linked (GlcNAc...) asparagine glycan is linked to N134.

Belongs to the IL-10 family. Homodimer. Interacts with IL10RA and IL10RB.

Its subcellular location is the secreted. Major immune regulatory cytokine that acts on many cells of the immune system where it has profound anti-inflammatory functions, limiting excessive tissue disruption caused by inflammation. Mechanistically, IL10 binds to its heterotetrameric receptor comprising IL10RA and IL10RB leading to JAK1 and STAT2-mediated phosphorylation of STAT3. In turn, STAT3 translocates to the nucleus where it drives expression of anti-inflammatory mediators. Targets antigen-presenting cells (APCs) such as macrophages and monocytes and inhibits their release of pro-inflammatory cytokines including granulocyte-macrophage colony-stimulating factor /GM-CSF, granulocyte colony-stimulating factor/G-CSF, IL-1 alpha, IL-1 beta, IL-6, IL-8 and TNF-alpha. Also interferes with antigen presentation by reducing the expression of MHC-class II and co-stimulatory molecules, thereby inhibiting their ability to induce T cell activation. In addition, controls the inflammatory response of macrophages by reprogramming essential metabolic pathways including mTOR signaling. The polypeptide is Interleukin-10 (IL10) (Cercocebus atys (Sooty mangabey)).